The chain runs to 772 residues: Semaphorin-3A (772 aa).

Residues Met1–Ala20 form the signal peptide. One can recognise a Sema domain in the interval Arg31–Leu514. N-linked (GlcNAc...) asparagine glycosylation is present at Asn53. Residues Cys103 and Cys114 are joined by a disulfide bond. A glycan (N-linked (GlcNAc...) asparagine) is linked at Asn125. Intrachain disulfides connect Cys132-Cys141, Cys269-Cys381, Cys293-Cys341, and Cys517-Cys535. Positions Pro579 to Thr665 constitute an Ig-like C2-type domain. N-linked (GlcNAc...) asparagine glycosylation is present at Asn591. A disulfide bond links Cys650 and Cys723. Positions Arg729–Pro738 are enriched in basic residues. Residues Arg729 to Val772 form a disordered region. The span at His750–Val772 shows a compositional bias: basic and acidic residues.

The protein belongs to the semaphorin family. Interacts with PXND1.

Its subcellular location is the secreted. Its function is as follows. Plays a role in growth cones guidance. May function to pattern sensory projections by selectively repelling axons that normally terminate dorsally. Involved in the development of the olfactory system and in neuronal control of puberty. The protein is Semaphorin-3A (Sema3a) of Mus musculus (Mouse).